The following is a 444-amino-acid chain: uncharacterized protein (444 aa).

Residues 1–69 form the HTH gntR-type domain; it reads MEKYMSLLTR…PKSGYYIVKK (69 aa). The segment at residues 29-48 is a DNA-binding region (H-T-H motif); sequence IRQLSARYQVSKSTVIRALQ. Lys286 carries the N6-(pyridoxal phosphate)lysine modification.

This sequence in the C-terminal section; belongs to the class-I pyridoxal-phosphate-dependent aminotransferase family. Requires pyridoxal 5'-phosphate as cofactor.

This is an uncharacterized protein from Bacillus subtilis (strain 168).